The sequence spans 88 residues: Homeobox protein knotted-1-like 3 (88 aa).

In terms of domain architecture, ELK spans 4–24 (ELKKQLLRKYSGCLGNLRKEL). The segment at residues 25–88 (CKKRKKDKLP…NQRKRHWKPS (64 aa)) is a DNA-binding region (homeobox; TALE-type).

This sequence belongs to the TALE/KNOX homeobox family. In terms of tissue distribution, strongly expressed in ear inflorescence primordia and shoot meristem. Weakly expressed in embryos. Absent from leaves.

Its subcellular location is the nucleus. Probably binds to the DNA sequence 5'-TGAC-3'. This chain is Homeobox protein knotted-1-like 3 (KNOX3), found in Zea mays (Maize).